Consider the following 666-residue polypeptide: Envelope glycoprotein (666 aa).

An N-terminal signal peptide occupies residues 1 to 33; it reads MDRPALPKSIKDKTNPWGPIILGILIMLGGALG. The receptor-binding domain (RBD) stretch occupies residues 31–264; it reads ALGKGSPHKV…KISDLGPRVP (234 aa). Residues 34 to 607 lie on the Extracellular side of the membrane; the sequence is KGSPHKVFNL…FNRSPWLTTL (574 aa). N-linked (GlcNAc...) asparagine; by host glycosylation occurs at asparagine 42. Cystine bridges form between cysteine 76–cysteine 127, cysteine 102–cysteine 116, cysteine 103–cysteine 112, cysteine 150–cysteine 170, and cysteine 162–cysteine 175. Aspartate 115 lines the Zn(2+) pocket. The N-linked (GlcNAc...) asparagine; by host glycan is linked to asparagine 197. Cysteines 207 and 213 form a disulfide. Residues 265 to 310 are disordered; that stretch reads IGPNPVLSEQRPPSQPEPARLPPSSNLTQGGTPSAPTGPPQEGTGD. The segment covering 287–299 has biased composition (polar residues); sequence PSSNLTQGGTPSA. 2 N-linked (GlcNAc...) asparagine; by host glycosylation sites follow: asparagine 290 and asparagine 324. Disulfide bonds link cysteine 334–cysteine 337, cysteine 334–cysteine 560, cysteine 364–cysteine 417, cysteine 424–cysteine 437, and cysteine 552–cysteine 560. The CXXC motif lies at 334–337; sequence CWLC. N-linked (GlcNAc...) asparagine; by host glycans are attached at residues asparagine 356 and asparagine 363. Residues 378-399 form a disordered region; the sequence is TGKPLPRKGSQDPPGPVQYHSG. N-linked (GlcNAc...) asparagine; by host glycosylation occurs at asparagine 431. The segment at 469-489 is fusion peptide; that stretch reads VSLTLALLLGGLTMGGIAAGV. Residues 500–534 are a coiled coil; that stretch reads QQFEQLHAAIQADLKEVESSITNLEKSLTSLSEVV. The tract at residues 535 to 551 is immunosuppression; sequence LQNRRGLDLLFLEKGGL. The short motif at 552–560 is the CX6CC element; the sequence is CAALKEECC. A helical membrane pass occupies residues 608 to 628; that stretch reads ISTIMGPLIILLLILMFGPCI. Cysteine 627 is lipidated: S-palmitoyl cysteine; by host. Over 629 to 666 the chain is Cytoplasmic; sequence LNRLVQFVKDRISVVQALVLTQQYHQLKPLEHGRAIVK. The short motif at 652 to 655 is the YXXL motif; contains endocytosis signal element; the sequence is YHQL.

In terms of assembly, the mature envelope protein (Env) consists of a trimer of SU-TM heterodimers attached by a labile interchain disulfide bond. In terms of processing, specific enzymatic cleavages in vivo yield mature proteins. Envelope glycoproteins are synthesized as an inactive precursor that is N-glycosylated and processed likely by host cell furin or by a furin-like protease in the Golgi to yield the mature SU and TM proteins. The cleavage site between SU and TM requires the minimal sequence [KR]-X-[KR]-R. The R-peptide is released from the C-terminus of the cytoplasmic tail of the TM protein upon particle formation as a result of proteolytic cleavage by the viral protease. Cleavage of this peptide is required for TM to become fusogenic. Post-translationally, the CXXC motif is highly conserved across a broad range of retroviral envelope proteins. It is thought to participate in the formation of a labile disulfide bond possibly with the CX6CC motif present in the transmembrane protein. Isomerization of the intersubunit disulfide bond to an SU intrachain disulfide bond is thought to occur upon receptor recognition in order to allow membrane fusion. The transmembrane protein is palmitoylated. In terms of processing, the R-peptide is palmitoylated.

It is found in the virion membrane. It localises to the host cell membrane. In terms of biological role, the surface protein (SU) attaches the virus to the host cell by binding to its receptor. This interaction triggers the refolding of the transmembrane protein (TM) and is thought to activate its fusogenic potential by unmasking its fusion peptide. Fusion occurs at the host cell plasma membrane. The transmembrane protein (TM) acts as a class I viral fusion protein. Under the current model, the protein has at least 3 conformational states: pre-fusion native state, pre-hairpin intermediate state, and post-fusion hairpin state. During viral and target cell membrane fusion, the coiled coil regions (heptad repeats) assume a trimer-of-hairpins structure, positioning the fusion peptide in close proximity to the C-terminal region of the ectodomain. The formation of this structure appears to drive apposition and subsequent fusion of viral and target cell membranes. Membranes fusion leads to delivery of the nucleocapsid into the cytoplasm. The sequence is that of Envelope glycoprotein (env) from Hortulanus murine leukemia virus (HoMuLV).